The following is a 471-amino-acid chain: Nuclear receptor subfamily 0 group B member 1 (471 aa).

Tandem repeats lie at residues 1 to 67, 68 to 134, and 135 to 201. Positions 1–253 are 4 X 67 AA tandem repeats; it reads MAGEDHQWQG…QRVALKSPQV (253 aa). 3 short sequence motifs (LXXLL motif) span residues 13–17, 80–84, and 147–151; these read LYNML and LYSLL. The stretch at 202–253 is one 4; truncated repeat; that stretch reads FCGEDHPRQSGILCNMPMSAKQTHVAPEAQPGAPWWDPSCAAQRVALKSPQV. The NR LBD domain maps to 210–470; that stretch reads QSGILCNMPM…DMMLEMLCAK (261 aa). Residues 462–467 carry the AF-2 motif motif; that stretch reads MMLEML.

Belongs to the nuclear hormone receptor family. NR0 subfamily. As to quaternary structure, homodimer. Interacts with NR5A1, NR5A2, NR0B2 and with COPS2. Interacts with ESRRB; represses ESRRB activity at the GATA6 promoter.

It is found in the nucleus. The protein localises to the cytoplasm. In terms of biological role, nuclear receptor that lacks a DNA-binding domain and acts as a corepressor that inhibits the transcriptional activity of other nuclear receptors through heterodimeric interactions. Component of a cascade required for the development of the hypothalamic-pituitary-adrenal-gonadal axis. May also have a role in the development of the embryo and in the maintenance of embryonic stem cell pluripotency. This chain is Nuclear receptor subfamily 0 group B member 1 (NR0B1), found in Sus scrofa (Pig).